The sequence spans 155 residues: Ribosome maturation factor RimP (155 aa).

It belongs to the RimP family.

It localises to the cytoplasm. Functionally, required for maturation of 30S ribosomal subunits. This chain is Ribosome maturation factor RimP, found in Staphylococcus carnosus (strain TM300).